The following is a 225-amino-acid chain: Biosynthetic peptidoglycan transglycosylase (225 aa).

Residues 7–27 form a helical membrane-spanning segment; the sequence is SFLFKMVLILLIAPIVLVGVV.

Belongs to the glycosyltransferase 51 family.

The protein localises to the cell inner membrane. It catalyses the reaction [GlcNAc-(1-&gt;4)-Mur2Ac(oyl-L-Ala-gamma-D-Glu-L-Lys-D-Ala-D-Ala)](n)-di-trans,octa-cis-undecaprenyl diphosphate + beta-D-GlcNAc-(1-&gt;4)-Mur2Ac(oyl-L-Ala-gamma-D-Glu-L-Lys-D-Ala-D-Ala)-di-trans,octa-cis-undecaprenyl diphosphate = [GlcNAc-(1-&gt;4)-Mur2Ac(oyl-L-Ala-gamma-D-Glu-L-Lys-D-Ala-D-Ala)](n+1)-di-trans,octa-cis-undecaprenyl diphosphate + di-trans,octa-cis-undecaprenyl diphosphate + H(+). It functions in the pathway cell wall biogenesis; peptidoglycan biosynthesis. Functionally, peptidoglycan polymerase that catalyzes glycan chain elongation from lipid-linked precursors. The protein is Biosynthetic peptidoglycan transglycosylase of Vibrio parahaemolyticus serotype O3:K6 (strain RIMD 2210633).